Here is a 507-residue protein sequence, read N- to C-terminus: Phosphoprotein (507 aa).

An interaction with N0 region spans residues 1–48 (MAEEQARHVKNGLECIRALKAEPIGSLAIEEAMAAWSEISDNPGQERA). Disordered stretches follow at residues 41-99 (DNPG…PPRN), 134-163 (GLDG…TEGY), 201-231 (NNFP…IKKG), and 250-273 (GATQ…GNVP). A Phosphoserine modification is found at serine 86. The segment covering 134–145 (GLDGDSTLSGGD) has biased composition (low complexity). Acidic residues predominate over residues 146 to 160 (NESENSDVDIGEPDT). Serine 151 carries the post-translational modification Phosphoserine. A compositionally biased stretch (low complexity) spans 260–270 (SEPSGPGAPAG). The segment at 304–376 (GDYYDDELFS…LSSIMIAIPG (73 aa)) is multimerization. Interaction with the L polymerase stretches follow at residues 361–377 (STLE…IPGL) and 396–410 (PIIG…AEVL). The segment at 457-507 (GPASRSVIRSIIKSSRLEEDRKRYLMTLLDDIKGANDLAKFHQMLMKIIMK) is x domain (XD). Positions 459–507 (ASRSVIRSIIKSSRLEEDRKRYLMTLLDDIKGANDLAKFHQMLMKIIMK) are interaction with the nucleocapsid (N-RNA).

It belongs to the morbillivirus P protein family. As to quaternary structure, homotetramer. Interacts (via multimerization domain and XD domain) with polymerase L; this interaction forms the polymerase L-P complex. Interacts (via N-terminus) with N0 (via Ncore); this interaction allows P to chaperon N0 to avoid N polymerization and non-specific RNA binding before encapsidation. Interacts (via C-terminus) with N-RNA template (via Ntail); this interaction maintains the P/L complex anchored to the nucleocapsid template during the sequential transcription. Interacts (via C-terminus) with protein C this interaction allows C to associate with the ribonucleocapsid. In terms of processing, phosphorylation on serines by host CK2 is necessary for the formation of viral factories.

Essential cofactor of the RNA polymerase L that plays a central role in the transcription and replication by forming the polymerase complex with RNA polymerase L and recruiting L to the genomic N-RNA template for RNA synthesis. Also plays a central role in the encapsidation of nascent RNA chains by forming the encapsidation complex with the nucleocapsid protein N (N-P complex). Acts as a chaperone for newly synthesized free N protein, so-called N0, allowing encapsidation of nascent RNA chains during replication. The nucleoprotein protein N prevents excessive phosphorylation of P, which leads to down-regulation of viral transcription/ replication. Participates, together with N, in the formation of viral factories (viroplasms), which are large inclusions in the host cytoplasm where replication takes place. The chain is Phosphoprotein (P/V) from Measles virus (strain Edmonston-AIK-C vaccine) (MeV).